We begin with the raw amino-acid sequence, 622 residues long: Sodium-coupled monocarboxylate transporter 1 (622 aa).

At 1–15 (MVTPGNIGSFTVWDY) the chain is on the extracellular side. Residues 16-36 (LVFALMLLISAVIGIYYAFAG) form a helical membrane-spanning segment. Residues 37–51 (GGQKTSKDFLMGGRS) lie on the Cytoplasmic side of the membrane. A helical transmembrane segment spans residues 52–72 (MTAVPVALSLTASFMSAVTVL). At 73 to 83 (GTPAEVYRFGA) the chain is on the extracellular side. Residues 84 to 104 (MFIIFAFSYTIVVIISSEVFL) form a helical membrane-spanning segment. At 105-128 (PVFYRLGITSTYEYLELRFNKFVR) the chain is on the cytoplasmic side. A helical transmembrane segment spans residues 129–149 (LLGTILFIIQTVLYTGIVIYA). Residues 150 to 161 (PALALNQVTGFD) are Extracellular-facing. The helical transmembrane segment at 162–182 (LWGAVVATGVVCTFYCTMGGL) threads the bilayer. The Cytoplasmic segment spans residues 183–184 (KA). The chain crosses the membrane as a helical span at residues 185-205 (VVWTDVFQVGIMVAGFTSVII). At 206–241 (RAVVVQGGIGPILNDSYYGDRLNFWDFDPNPLKRHT) the chain is on the extracellular side. Residue N219 is glycosylated (N-linked (GlcNAc...) asparagine). The chain crosses the membrane as a helical span at residues 242–262 (FWTIVVGGTFTWTGIYGVNQA). At 263–283 (QVQRYIACKTRFQAKMSLYVN) the chain is on the cytoplasmic side. Residues 284-304 (LIGLWAILACAVLSGLAMYSI) traverse the membrane as a helical segment. Over 305–336 (YKDCDPWTAKFVSAPDQLMPYLALDILRDYPG) the chain is Extracellular. A helical membrane pass occupies residues 337-357 (LPGLFVSCAYSGTLSTVSSSI). Residues 358 to 389 (NALAAVTVEDLIKPYIRSLSEKKMSWISKGTS) are Cytoplasmic-facing. The chain crosses the membrane as a helical span at residues 390-410 (LLYGAICIGMAGIASLMGGLL). The Extracellular portion of the chain corresponds to 411–415 (QAALS). Residues 416 to 436 (IFGMVGGPLLGLFSLGILFPF) form a helical membrane-spanning segment. At 437–438 (VN) the chain is on the cytoplasmic side. Residues 439–459 (SLGAVIGLLSGFAISLWVGIG) form a helical membrane-spanning segment. At 460–521 (SQIYAPSPSS…LADSWYSLSY (62 aa)) the chain is on the extracellular side. Residues N481 and N488 are each glycosylated (N-linked (GlcNAc...) asparagine). A helical transmembrane segment spans residues 522-542 (LYFSTIGTIVAVLVGVIVSLL). The Cytoplasmic segment spans residues 543 to 622 (SGGLKQNVNR…KGEKTNGITA (80 aa)). Residues 591 to 622 (DNDMEQGTDNPAFNNMEMTSTEKGEKTNGITA) are disordered. A compositionally biased stretch (polar residues) spans 595–609 (EQGTDNPAFNNMEMT).

This sequence belongs to the sodium:solute symporter (SSF) (TC 2.A.21) family. In the gastrula and neurula stages, expressed in the gastrula anterior endoderm and in the entire circumference of the blastopore lip superficial endoderm. At tailbud stages, abundant expression observed in the ventral midgut region. As development proceeds expression becomes restricted to the liver diverticulum and ultimately to the presumptive gallbladder, by tadpole stage 35. Also present in pronephros and the tip of the tail.

Its subcellular location is the apical cell membrane. It carries out the reaction (S)-lactate(out) + 2 Na(+)(out) = (S)-lactate(in) + 2 Na(+)(in). The enzyme catalyses propanoate(out) + 2 Na(+)(out) = propanoate(in) + 2 Na(+)(in). It catalyses the reaction pyruvate(out) + 2 Na(+)(out) = pyruvate(in) + 2 Na(+)(in). The catalysed reaction is acetate(out) + 2 Na(+)(out) = acetate(in) + 2 Na(+)(in). It carries out the reaction butanoate(out) + 2 Na(+)(out) = butanoate(in) + 2 Na(+)(in). The enzyme catalyses nicotinate(out) + 2 Na(+)(out) = nicotinate(in) + 2 Na(+)(in). It catalyses the reaction (R)-3-hydroxybutanoate(out) + 2 Na(+)(out) = (R)-3-hydroxybutanoate(in) + 2 Na(+)(in). The catalysed reaction is acetoacetate(out) + 2 Na(+)(out) = acetoacetate(in) + 2 Na(+)(in). It carries out the reaction 4-methyl-2-oxopentanoate(out) + 2 Na(+)(out) = 4-methyl-2-oxopentanoate(in) + 2 Na(+)(in). The enzyme catalyses 5-oxo-L-proline(out) + 2 Na(+)(out) = 5-oxo-L-proline(in) + 2 Na(+)(in). It catalyses the reaction iodide(out) = iodide(in). The catalysed reaction is chloride(in) = chloride(out). It carries out the reaction nitrate(in) = nitrate(out). The enzyme catalyses bromide(in) = bromide(out). In terms of biological role, acts as an electrogenic sodium (Na(+)) and chloride (Cl-)-dependent sodium-coupled solute transporter, including transport of monocarboxylates (short-chain fatty acids including L-lactate, D-lactate, pyruvate, acetate, propionate, valerate and butyrate), mocarboxylate drugs (nicotinate, benzoate, salicylate and 5-aminosalicylate) and ketone bodies (beta-D-hydroxybutyrate, acetoacetate and alpha-ketoisocaproate), with a Na(+):substrate stoichiometry of between 4:1 and 2:1. Catalyzes passive carrier mediated diffusion of iodide. Mediates iodide transport from the thyrocyte into the colloid lumen through the apical membrane. Mediates sodium-coupled electrogenic transport of pyroglutamate (5-oxo-L-proline). Can mediate the transport of chloride, bromide, iodide and nitrate ions when external concentration of sodium ions is reduced. This is Sodium-coupled monocarboxylate transporter 1 from Xenopus laevis (African clawed frog).